A 213-amino-acid chain; its full sequence is MTQLVLASASPARLAVLRAAGVSPLVRVSGVDEDKIADNLGPDAAPEKVVTVLAEAKAAEIVPGLAADNLTDVVVVGCDSMLLIDGQLQGKPGSVDIARKRWAAMAGRSATLLTGHCVLRVADGRIVRMASDHSATVVHFAQPSTEDLEAYLATGEPLQVAGAFTLDSLGGWFVERIEGDPSSVIGIGLPLVRTLLERVGVSVSDLWRTQSIF.

Asp79 acts as the Proton acceptor in catalysis.

Belongs to the Maf family. The cofactor is a divalent metal cation.

The protein localises to the cytoplasm. It carries out the reaction a ribonucleoside 5'-triphosphate + H2O = a ribonucleoside 5'-phosphate + diphosphate + H(+). It catalyses the reaction a 2'-deoxyribonucleoside 5'-triphosphate + H2O = a 2'-deoxyribonucleoside 5'-phosphate + diphosphate + H(+). Nucleoside triphosphate pyrophosphatase. May have a dual role in cell division arrest and in preventing the incorporation of modified nucleotides into cellular nucleic acids. In Rhodococcus erythropolis (strain PR4 / NBRC 100887), this protein is Nucleoside triphosphate pyrophosphatase.